Reading from the N-terminus, the 156-residue chain is Large ribosomal subunit protein uL22 (156 aa).

Belongs to the universal ribosomal protein uL22 family. In terms of assembly, part of the 50S ribosomal subunit.

Its function is as follows. This protein binds specifically to 23S rRNA. It makes multiple contacts with different domains of the 23S rRNA in the assembled 50S subunit and ribosome. Functionally, the globular domain of the protein is located near the polypeptide exit tunnel on the outside of the subunit, while an extended beta-hairpin is found that lines the wall of the exit tunnel in the center of the 70S ribosome. The polypeptide is Large ribosomal subunit protein uL22 (Sulfurisphaera tokodaii (strain DSM 16993 / JCM 10545 / NBRC 100140 / 7) (Sulfolobus tokodaii)).